Reading from the N-terminus, the 132-residue chain is Ribosome-binding factor A (132 aa).

Belongs to the RbfA family. As to quaternary structure, monomer. Binds 30S ribosomal subunits, but not 50S ribosomal subunits or 70S ribosomes.

It is found in the cytoplasm. Functionally, one of several proteins that assist in the late maturation steps of the functional core of the 30S ribosomal subunit. Associates with free 30S ribosomal subunits (but not with 30S subunits that are part of 70S ribosomes or polysomes). Required for efficient processing of 16S rRNA. May interact with the 5'-terminal helix region of 16S rRNA. The protein is Ribosome-binding factor A of Pseudomonas entomophila (strain L48).